Reading from the N-terminus, the 77-residue chain is Small nuclear ribonucleoprotein G (77 aa).

The 73-residue stretch at 4–76 (AGAPDLKKYL…VIMIETLDKM (73 aa)) folds into the Sm domain.

Belongs to the snRNP Sm proteins family. Belongs to the 40S cdc5-associated complex (or cwf complex), a spliceosome sub-complex reminiscent of a late-stage spliceosome composed of the U2, U5 and U6 snRNAs and at least brr2, cdc5, cwf2/prp3, cwf3/syf1, cwf4/syf3, cwf5/ecm2, spp42/cwf6, cwf7/spf27, cwf8, cwf9, cwf10, cwf11, cwf12, prp45/cwf13, cwf14, cwf15, cwf16, cwf17, cwf18, cwf19, cwf20, cwf21, cwf22, cwf23, cwf24, cwf25, cwf26, cyp7/cwf27, cwf28, cwf29/ist3, lea1, msl1, prp5/cwf1, prp10, prp12/sap130, prp17, prp22, sap61, sap62, sap114, sap145, slu7, smb1, smd1, smd3, smf1, smg1 and syf2.

The protein resides in the nucleus. Its subcellular location is the cytoplasm. Plays a role in pre-mRNA splicing as a core component of the spliceosomal U1, U2, U4 and U5 small nuclear ribonucleoproteins (snRNPs), the building blocks of the spliceosome. The sequence is that of Small nuclear ribonucleoprotein G (smg1) from Schizosaccharomyces pombe (strain 972 / ATCC 24843) (Fission yeast).